The sequence spans 108 residues: Urease subunit gamma (108 aa).

The protein belongs to the urease gamma subunit family. As to quaternary structure, heterotrimer of UreA (gamma), UreB (beta) and UreC (alpha) subunits. Three heterotrimers associate to form the active enzyme.

Its subcellular location is the cytoplasm. It catalyses the reaction urea + 2 H2O + H(+) = hydrogencarbonate + 2 NH4(+). The protein operates within nitrogen metabolism; urea degradation; CO(2) and NH(3) from urea (urease route): step 1/1. The chain is Urease subunit gamma from Haloquadratum walsbyi (strain DSM 16790 / HBSQ001).